The primary structure comprises 468 residues: Nuclear receptor ROR-alpha A (468 aa).

The segment at residues 15–90 (IIPCKICGDK…VGMSRDAVKF (76 aa)) is a DNA-binding region (nuclear receptor). 2 NR C4-type zinc fingers span residues 18–38 (CKIC…CEGC) and 54–73 (CPRQ…CQHC). 2 disordered regions span residues 101–129 (LYAE…PLTP) and 142–163 (HDDL…DSGV). The NR LBD domain occupies 217 to 455 (ELEHLAQNIS…AHFPPLYKEL (239 aa)). The interval 444–455 (VRAHFPPLYKEL) is AF-2.

The protein belongs to the nuclear hormone receptor family. NR1 subfamily. In terms of tissue distribution, expressed in the brain, in cerebellar-like structures, including Purkinje cells.

Its subcellular location is the nucleus. In terms of biological role, nuclear receptor that binds DNA as a monomer to ROR response elements (RORE). Required for proper cerebellum development. The sequence is that of Nuclear receptor ROR-alpha A (roraa) from Danio rerio (Zebrafish).